The primary structure comprises 272 residues: Ribosomal RNA large subunit methyltransferase E (272 aa).

The S-adenosyl-L-methionine site is built by Gly50, Trp52, Asp68, Asp84, and Asp109. Catalysis depends on Lys149, which acts as the Proton acceptor. Positions 196–254 constitute a TRAM domain; sequence PLRRGDKFVVDIEKLGSGGDGAVLIEGFVVFVKEVEVGEKVRIKIADVKPNFAFADVEE.

The protein belongs to the class I-like SAM-binding methyltransferase superfamily. RNA methyltransferase RlmE family.

It localises to the cytoplasm. The enzyme catalyses uridine(2552) in 23S rRNA + S-adenosyl-L-methionine = 2'-O-methyluridine(2552) in 23S rRNA + S-adenosyl-L-homocysteine + H(+). Its function is as follows. Specifically methylates the uridine in position 2552 of 23S rRNA at the 2'-O position of the ribose in the fully assembled 50S ribosomal subunit. The polypeptide is Ribosomal RNA large subunit methyltransferase E (Methanosarcina acetivorans (strain ATCC 35395 / DSM 2834 / JCM 12185 / C2A)).